Consider the following 597-residue polypeptide: Elongation factor 4 (597 aa).

The tr-type G domain maps to 2–184; sequence DHIRNFSIIA…ALIAKVPPPK (183 aa). GTP is bound by residues 14-19 and 131-134; these read DHGKST and NKID.

It belongs to the TRAFAC class translation factor GTPase superfamily. Classic translation factor GTPase family. LepA subfamily.

It localises to the cell inner membrane. It carries out the reaction GTP + H2O = GDP + phosphate + H(+). In terms of biological role, required for accurate and efficient protein synthesis under certain stress conditions. May act as a fidelity factor of the translation reaction, by catalyzing a one-codon backward translocation of tRNAs on improperly translocated ribosomes. Back-translocation proceeds from a post-translocation (POST) complex to a pre-translocation (PRE) complex, thus giving elongation factor G a second chance to translocate the tRNAs correctly. Binds to ribosomes in a GTP-dependent manner. In Paraburkholderia phymatum (strain DSM 17167 / CIP 108236 / LMG 21445 / STM815) (Burkholderia phymatum), this protein is Elongation factor 4.